The sequence spans 85 residues: Large ribosomal subunit protein bL31B (85 aa).

This sequence belongs to the bacterial ribosomal protein bL31 family. Type B subfamily. Part of the 50S ribosomal subunit.

The polypeptide is Large ribosomal subunit protein bL31B (Vibrio cholerae serotype O1 (strain ATCC 39541 / Classical Ogawa 395 / O395)).